We begin with the raw amino-acid sequence, 127 residues long: MNLLIVAIGGGIGAIARYLVGQWMMKRFPDPPFPIAMLVVNLLGSFGLGAFFGLYYHELFAASYDDIGYLFGGIGFFGAFTTYSTFSVEAVLLIREREWKKLFSYVLLSIVGSIAAFLLGFYGTSSW.

A run of 4 helical transmembrane segments spans residues 3–23, 35–55, 74–94, and 102–122; these read LLIV…VGQW, IAML…FGLY, IGFF…VLLI, and LFSY…LGFY. 2 residues coordinate Na(+): Gly-78 and Thr-81.

This sequence belongs to the fluoride channel Fluc/FEX (TC 1.A.43) family.

Its subcellular location is the cell membrane. The enzyme catalyses fluoride(in) = fluoride(out). With respect to regulation, na(+) is not transported, but it plays an essential structural role and its presence is essential for fluoride channel function. In terms of biological role, fluoride-specific ion channel. Important for reducing fluoride concentration in the cell, thus reducing its toxicity. In Halalkalibacterium halodurans (strain ATCC BAA-125 / DSM 18197 / FERM 7344 / JCM 9153 / C-125) (Bacillus halodurans), this protein is Fluoride-specific ion channel FluC 1.